A 277-amino-acid polypeptide reads, in one-letter code: Ribosomal RNA small subunit methyltransferase A (277 aa).

S-adenosyl-L-methionine-binding residues include H20, L22, G47, E71, D94, and N116.

It belongs to the class I-like SAM-binding methyltransferase superfamily. rRNA adenine N(6)-methyltransferase family. RsmA subfamily.

It is found in the cytoplasm. It carries out the reaction adenosine(1518)/adenosine(1519) in 16S rRNA + 4 S-adenosyl-L-methionine = N(6)-dimethyladenosine(1518)/N(6)-dimethyladenosine(1519) in 16S rRNA + 4 S-adenosyl-L-homocysteine + 4 H(+). Specifically dimethylates two adjacent adenosines (A1518 and A1519) in the loop of a conserved hairpin near the 3'-end of 16S rRNA in the 30S particle. May play a critical role in biogenesis of 30S subunits. In Burkholderia sp, this protein is Ribosomal RNA small subunit methyltransferase A.